The following is a 482-amino-acid chain: Probable glycine dehydrogenase (decarboxylating) subunit 2 (482 aa).

Residue lysine 264 is modified to N6-(pyridoxal phosphate)lysine.

Belongs to the GcvP family. C-terminal subunit subfamily. As to quaternary structure, the glycine cleavage system is composed of four proteins: P, T, L and H. In this organism, the P 'protein' is a heterodimer of two subunits. Pyridoxal 5'-phosphate is required as a cofactor.

It catalyses the reaction N(6)-[(R)-lipoyl]-L-lysyl-[glycine-cleavage complex H protein] + glycine + H(+) = N(6)-[(R)-S(8)-aminomethyldihydrolipoyl]-L-lysyl-[glycine-cleavage complex H protein] + CO2. In terms of biological role, the glycine cleavage system catalyzes the degradation of glycine. The P protein binds the alpha-amino group of glycine through its pyridoxal phosphate cofactor; CO(2) is released and the remaining methylamine moiety is then transferred to the lipoamide cofactor of the H protein. In Treponema denticola (strain ATCC 35405 / DSM 14222 / CIP 103919 / JCM 8153 / KCTC 15104), this protein is Probable glycine dehydrogenase (decarboxylating) subunit 2.